The chain runs to 1594 residues: Protein SHORTAGE IN CHIASMATA 1 (1594 aa).

5 disordered regions span residues D1148–K1180, A1239–F1283, A1396–N1426, R1491–R1523, and G1536–K1594. Low complexity predominate over residues S1151–D1165. 2 stretches are compositionally biased toward basic and acidic residues: residues P1254–S1265 and S1402–Y1414. Residues Q1577–K1594 are compositionally biased toward polar residues.

It belongs to the XPF family. As to quaternary structure, interacts with PTD. As to expression, highest levels in young buds, where male meiosis occurs. Also present at low levels in plantlets, leaves, flowers, and roots.

The protein localises to the nucleus. Essential for the formation of class I meiotic crossovers. This is Protein SHORTAGE IN CHIASMATA 1 from Arabidopsis thaliana (Mouse-ear cress).